The primary structure comprises 87 residues: MAEKTFTITAETGIHARPATQLVNKAGQYSSEITLEYKGKAVNLKSIMGVMSLGVGKGAQVTIKAEGSDEAEALKGIEEVIKEGLGE.

Residues 1–87 (MAEKTFTITA…EEVIKEGLGE (87 aa)) enclose the HPr domain. H15 serves as the catalytic Pros-phosphohistidine intermediate. S46 is subject to Phosphoserine; by HPrK/P.

The protein belongs to the HPr family.

Its subcellular location is the cytoplasm. With respect to regulation, phosphorylation on Ser-46 inhibits the phosphoryl transfer from enzyme I to HPr. Functionally, general (non sugar-specific) component of the phosphoenolpyruvate-dependent sugar phosphotransferase system (sugar PTS). This major carbohydrate active-transport system catalyzes the phosphorylation of incoming sugar substrates concomitantly with their translocation across the cell membrane. The phosphoryl group from phosphoenolpyruvate (PEP) is transferred to the phosphoryl carrier protein HPr by enzyme I. Phospho-HPr then transfers it to the PTS EIIA domain. P-Ser-HPr interacts with the catabolite control protein A (CcpA), forming a complex that binds to DNA at the catabolite response elements cre, operator sites preceding a large number of catabolite-regulated genes. Thus, P-Ser-HPr is a corepressor in carbon catabolite repression (CCR), a mechanism that allows bacteria to coordinate and optimize the utilization of available carbon sources. P-Ser-HPr also plays a role in inducer exclusion, in which it probably interacts with several non-PTS permeases and inhibits their transport activity. This is Phosphocarrier protein HPr (ptsH) from Halalkalibacterium halodurans (strain ATCC BAA-125 / DSM 18197 / FERM 7344 / JCM 9153 / C-125) (Bacillus halodurans).